The chain runs to 201 residues: Peptidyl-tRNA hydrolase (201 aa).

Residue Y15 coordinates tRNA. Catalysis depends on H20, which acts as the Proton acceptor. TRNA contacts are provided by Y66, N68, and N114.

Belongs to the PTH family. Monomer.

The protein resides in the cytoplasm. It catalyses the reaction an N-acyl-L-alpha-aminoacyl-tRNA + H2O = an N-acyl-L-amino acid + a tRNA + H(+). Hydrolyzes ribosome-free peptidyl-tRNAs (with 1 or more amino acids incorporated), which drop off the ribosome during protein synthesis, or as a result of ribosome stalling. In terms of biological role, catalyzes the release of premature peptidyl moieties from peptidyl-tRNA molecules trapped in stalled 50S ribosomal subunits, and thus maintains levels of free tRNAs and 50S ribosomes. This chain is Peptidyl-tRNA hydrolase, found in Burkholderia mallei (strain NCTC 10247).